The following is a 441-amino-acid chain: Chromosomal replication initiator protein DnaA (441 aa).

A domain I, interacts with DnaA modulators region spans residues 1-80 (MQNDVLARWE…MHQEISLQFI (80 aa)). The tract at residues 80–102 (ILAGQEVDQPKPKERSSEETYIN) is domain II. Residues 103–320 (ILNPRYTFDT…GALIRVSAFS (218 aa)) are domain III, AAA+ region. Residues Gly147, Gly149, Lys150, and Thr151 each contribute to the ATP site. The domain IV, binds dsDNA stretch occupies residues 321–441 (SLEQRDATPQ…IKELKKRIGE (121 aa)).

It belongs to the DnaA family. As to quaternary structure, oligomerizes as a right-handed, spiral filament on DNA at oriC.

It localises to the cytoplasm. Plays an essential role in the initiation and regulation of chromosomal replication. ATP-DnaA binds to the origin of replication (oriC) to initiate formation of the DNA replication initiation complex once per cell cycle. Binds the DnaA box (a 9 base pair repeat at the origin) and separates the double-stranded (ds)DNA. Forms a right-handed helical filament on oriC DNA; dsDNA binds to the exterior of the filament while single-stranded (ss)DNA is stabiized in the filament's interior. The ATP-DnaA-oriC complex binds and stabilizes one strand of the AT-rich DNA unwinding element (DUE), permitting loading of DNA polymerase. After initiation quickly degrades to an ADP-DnaA complex that is not apt for DNA replication. Binds acidic phospholipids. In Desulforamulus reducens (strain ATCC BAA-1160 / DSM 100696 / MI-1) (Desulfotomaculum reducens), this protein is Chromosomal replication initiator protein DnaA.